Here is a 229-residue protein sequence, read N- to C-terminus: UPF0758 protein MM_2791 (229 aa).

Residues 106–228 enclose the MPN domain; the sequence is KISSPKDVYT…YVSLKDEGFV (123 aa). Zn(2+) is bound by residues histidine 177, histidine 179, and aspartate 190. The JAMM motif signature appears at 177 to 190; that stretch reads HNHPSGDPSPSRED.

This sequence belongs to the UPF0758 family.

The chain is UPF0758 protein MM_2791 from Methanosarcina mazei (strain ATCC BAA-159 / DSM 3647 / Goe1 / Go1 / JCM 11833 / OCM 88) (Methanosarcina frisia).